The chain runs to 276 residues: 2-dehydro-3-deoxyphosphooctonate aldolase (276 aa).

It belongs to the KdsA family.

It localises to the cytoplasm. The enzyme catalyses D-arabinose 5-phosphate + phosphoenolpyruvate + H2O = 3-deoxy-alpha-D-manno-2-octulosonate-8-phosphate + phosphate. It functions in the pathway carbohydrate biosynthesis; 3-deoxy-D-manno-octulosonate biosynthesis; 3-deoxy-D-manno-octulosonate from D-ribulose 5-phosphate: step 2/3. The protein operates within bacterial outer membrane biogenesis; lipopolysaccharide biosynthesis. This Xanthomonas campestris pv. campestris (strain 8004) protein is 2-dehydro-3-deoxyphosphooctonate aldolase.